A 138-amino-acid chain; its full sequence is Urease subunit beta (138 aa).

The tract at residues 115 to 138 (RMRAAGFGDTGEAAPDDGDTESDQ) is disordered. The span at 128 to 138 (APDDGDTESDQ) shows a compositional bias: acidic residues.

It belongs to the urease beta subunit family. As to quaternary structure, heterotrimer of UreA (gamma), UreB (beta) and UreC (alpha) subunits. Three heterotrimers associate to form the active enzyme.

The protein resides in the cytoplasm. The enzyme catalyses urea + 2 H2O + H(+) = hydrogencarbonate + 2 NH4(+). It functions in the pathway nitrogen metabolism; urea degradation; CO(2) and NH(3) from urea (urease route): step 1/1. In Haloarcula marismortui (strain ATCC 43049 / DSM 3752 / JCM 8966 / VKM B-1809) (Halobacterium marismortui), this protein is Urease subunit beta.